The sequence spans 297 residues: HTH-type transcriptional regulator ArgP (297 aa).

The region spanning Pro4–Thr60 is the HTH lysR-type domain. The H-T-H motif DNA-binding region spans Phe21–Lys40.

Belongs to the LysR transcriptional regulatory family. Homodimer.

Controls the transcription of genes involved in arginine and lysine metabolism. The polypeptide is HTH-type transcriptional regulator ArgP (Cronobacter sakazakii (strain ATCC BAA-894) (Enterobacter sakazakii)).